Consider the following 210-residue polypeptide: Fibroblast growth factor 8 (210 aa).

The N-terminal stretch at 1 to 27 (MRLIPSRLSYLFLHLFAFCYYAQVTIQ) is a signal peptide.

It belongs to the heparin-binding growth factors family. In terms of assembly, monomer. Homodimer.

The protein localises to the secreted. Its function is as follows. Plays an important role in the regulation of embryonic development, cell proliferation, cell differentiation and cell migration. Required for Kupffer's vesicle ciliogenesis. This Danio rerio (Zebrafish) protein is Fibroblast growth factor 8.